A 372-amino-acid polypeptide reads, in one-letter code: Erythronate-4-phosphate dehydrogenase (372 aa).

Substrate is bound by residues Ser-45 and Thr-66. Residue Asp-146 coordinates NAD(+). Arg-209 is a catalytic residue. Residue Asp-233 coordinates NAD(+). Glu-238 is a catalytic residue. His-255 acts as the Proton donor in catalysis. Gly-258 contributes to the NAD(+) binding site. Position 259 (Tyr-259) interacts with substrate.

The protein belongs to the D-isomer specific 2-hydroxyacid dehydrogenase family. PdxB subfamily. Homodimer.

The protein localises to the cytoplasm. The enzyme catalyses 4-phospho-D-erythronate + NAD(+) = (R)-3-hydroxy-2-oxo-4-phosphooxybutanoate + NADH + H(+). The protein operates within cofactor biosynthesis; pyridoxine 5'-phosphate biosynthesis; pyridoxine 5'-phosphate from D-erythrose 4-phosphate: step 2/5. Catalyzes the oxidation of erythronate-4-phosphate to 3-hydroxy-2-oxo-4-phosphonooxybutanoate. The chain is Erythronate-4-phosphate dehydrogenase from Blochmanniella floridana.